The sequence spans 381 residues: Carboxylesterase 5A (381 aa).

The active-site Acyl-ester intermediate is serine 108. An intrachain disulfide couples cysteine 162 to cysteine 173. Asparagine 163 carries N-linked (GlcNAc...) asparagine glycosylation. Glutamate 227 serves as the catalytic Charge relay system. A glycan (N-linked (GlcNAc...) asparagine) is linked at asparagine 245. The Charge relay system role is filled by histidine 336.

It belongs to the type-B carboxylesterase/lipase family. Component of a epididymal complex at least composed of soluble form of prion protein PRNP, CLU, BPI, CES5A, MANBA and GLB1. In terms of processing, N-glycosylated. Detected in corpus and cauda epididymal fluid. Present in seminal fluid but not found to be associated with sperm (at protein level). Not expressed in other tissues.

The protein localises to the secreted. The enzyme catalyses a carboxylic ester + H2O = an alcohol + a carboxylate + H(+). Involved in the detoxification of xenobiotics and in the activation of ester and amide prodrugs. In Ovis aries (Sheep), this protein is Carboxylesterase 5A (CES5A).